We begin with the raw amino-acid sequence, 60 residues long: Cytotoxin 1 (60 aa).

Intrachain disulfides connect C3–C21, C14–C38, C42–C53, and C54–C59.

This sequence belongs to the three-finger toxin family. Short-chain subfamily. Type IA cytotoxin sub-subfamily. In terms of assembly, monomer, or heterodimer with alpha-cobratoxin (AC P01391); disulfide-linked. Expressed by the venom gland.

The protein resides in the secreted. Its subcellular location is the target cell membrane. Monomer: shows cytolytic activity (apoptosis is induced in C2C12 cells, but no cytotoxicity is observed on INS-1E). In addition, this toxin shows insulinotropic activity that may be mediated by the modulation of potassium channels (Kv). It induces the increase of intracellular calcium release. It induces insulin secretion from rat INS-1E cells in absence and in presence of glucose, without affecting cell viability and integrity. In presence of glucose, the insulinotropic activity is increased, suggesting a possible synergistic effect with glucose. Its insulinotropic activity does not involve GLP-1R signaling. Functionally, heterodimer: has no cytolytic activity, but retains most of the alpha-cobratoxin capacity to compete with alpha-bungarotoxin for binding to Torpedo and alpha-7/CHRNA7 nicotinic acetylcholine receptors (nAChRs) as well as to Lymnea stagnalis acetylcholine-binding protein. This Naja kaouthia (Monocled cobra) protein is Cytotoxin 1.